Here is a 316-residue protein sequence, read N- to C-terminus: Annexin D7 (316 aa).

A2 bears the N-acetylalanine mark. Annexin repeat units lie at residues 11–82, 83–154, 166–237, and 241–312; these read PLPE…LWTF, EPAE…PLVS, TLAR…AVIK, and YPEK…ALLG. F24, G26, G28, and E68 together coordinate Ca(2+). S95 carries the post-translational modification Phosphoserine. A phosphothreonine mark is found at T100 and T112. Residue Y129 is modified to Phosphotyrosine. Positions 254 and 258 each coordinate Ca(2+). Y283 carries the post-translational modification Phosphotyrosine. The residue at position 288 (S288) is a Phosphoserine. The Ca(2+) site is built by D298, T299, and E304.

Belongs to the annexin (TC 1.A.31.1) family. In terms of tissue distribution, expressed in flowers.

In Arabidopsis thaliana (Mouse-ear cress), this protein is Annexin D7 (ANNAT7).